We begin with the raw amino-acid sequence, 206 residues long: Pyridoxine/pyridoxamine 5'-phosphate oxidase (206 aa).

FMN contacts are provided by residues 53–58 (RMVLLK), 68–69 (YT), Lys-75, and Gln-97. Lys-58 serves as a coordination point for substrate. Substrate is bound by residues Tyr-115, Arg-119, and Ser-123. FMN-binding positions include 132-133 (QS) and Trp-177. 183 to 185 (RLH) contributes to the substrate binding site. Arg-187 provides a ligand contact to FMN.

This sequence belongs to the pyridoxamine 5'-phosphate oxidase family. As to quaternary structure, homodimer. The cofactor is FMN.

It carries out the reaction pyridoxamine 5'-phosphate + O2 + H2O = pyridoxal 5'-phosphate + H2O2 + NH4(+). The enzyme catalyses pyridoxine 5'-phosphate + O2 = pyridoxal 5'-phosphate + H2O2. It participates in cofactor metabolism; pyridoxal 5'-phosphate salvage; pyridoxal 5'-phosphate from pyridoxamine 5'-phosphate: step 1/1. Its pathway is cofactor metabolism; pyridoxal 5'-phosphate salvage; pyridoxal 5'-phosphate from pyridoxine 5'-phosphate: step 1/1. In terms of biological role, catalyzes the oxidation of either pyridoxine 5'-phosphate (PNP) or pyridoxamine 5'-phosphate (PMP) into pyridoxal 5'-phosphate (PLP). In Rhizobium etli (strain CIAT 652), this protein is Pyridoxine/pyridoxamine 5'-phosphate oxidase.